The following is a 267-amino-acid chain: Ribosomal RNA small subunit methyltransferase A (267 aa).

Residues His13, Leu15, Gly40, Glu61, Asp85, and Asn105 each contribute to the S-adenosyl-L-methionine site.

Belongs to the class I-like SAM-binding methyltransferase superfamily. rRNA adenine N(6)-methyltransferase family. RsmA subfamily.

It is found in the cytoplasm. It catalyses the reaction adenosine(1518)/adenosine(1519) in 16S rRNA + 4 S-adenosyl-L-methionine = N(6)-dimethyladenosine(1518)/N(6)-dimethyladenosine(1519) in 16S rRNA + 4 S-adenosyl-L-homocysteine + 4 H(+). Functionally, specifically dimethylates two adjacent adenosines (A1518 and A1519) in the loop of a conserved hairpin near the 3'-end of 16S rRNA in the 30S particle. May play a critical role in biogenesis of 30S subunits. The protein is Ribosomal RNA small subunit methyltransferase A of Bacteroides thetaiotaomicron (strain ATCC 29148 / DSM 2079 / JCM 5827 / CCUG 10774 / NCTC 10582 / VPI-5482 / E50).